A 202-amino-acid polypeptide reads, in one-letter code: Imidazole glycerol phosphate synthase subunit HisH (202 aa).

The region spanning 3–202 (RIVILDYGLG…KILKNFVDMC (200 aa)) is the Glutamine amidotransferase type-1 domain. Catalysis depends on Cys79, which acts as the Nucleophile. Residues His183 and Glu185 contribute to the active site.

In terms of assembly, heterodimer of HisH and HisF.

The protein localises to the cytoplasm. The enzyme catalyses 5-[(5-phospho-1-deoxy-D-ribulos-1-ylimino)methylamino]-1-(5-phospho-beta-D-ribosyl)imidazole-4-carboxamide + L-glutamine = D-erythro-1-(imidazol-4-yl)glycerol 3-phosphate + 5-amino-1-(5-phospho-beta-D-ribosyl)imidazole-4-carboxamide + L-glutamate + H(+). The catalysed reaction is L-glutamine + H2O = L-glutamate + NH4(+). It participates in amino-acid biosynthesis; L-histidine biosynthesis; L-histidine from 5-phospho-alpha-D-ribose 1-diphosphate: step 5/9. Its function is as follows. IGPS catalyzes the conversion of PRFAR and glutamine to IGP, AICAR and glutamate. The HisH subunit catalyzes the hydrolysis of glutamine to glutamate and ammonia as part of the synthesis of IGP and AICAR. The resulting ammonia molecule is channeled to the active site of HisF. The chain is Imidazole glycerol phosphate synthase subunit HisH from Methanosarcina barkeri (strain Fusaro / DSM 804).